A 289-amino-acid polypeptide reads, in one-letter code: ATP synthase gamma chain (289 aa).

It belongs to the ATPase gamma chain family. F-type ATPases have 2 components, CF(1) - the catalytic core - and CF(0) - the membrane proton channel. CF(1) has five subunits: alpha(3), beta(3), gamma(1), delta(1), epsilon(1). CF(0) has three main subunits: a, b and c.

The protein resides in the cell membrane. Produces ATP from ADP in the presence of a proton gradient across the membrane. The gamma chain is believed to be important in regulating ATPase activity and the flow of protons through the CF(0) complex. This is ATP synthase gamma chain from Lactococcus lactis subsp. cremoris (strain SK11).